A 364-amino-acid chain; its full sequence is UDP-N-acetylglucosamine--N-acetylmuramyl-(pentapeptide) pyrophosphoryl-undecaprenol N-acetylglucosamine transferase (364 aa).

UDP-N-acetyl-alpha-D-glucosamine-binding positions include 10 to 12 (TAG), asparagine 124, arginine 161, serine 195, and glutamine 291.

This sequence belongs to the glycosyltransferase 28 family. MurG subfamily.

Its subcellular location is the cell membrane. The catalysed reaction is di-trans,octa-cis-undecaprenyl diphospho-N-acetyl-alpha-D-muramoyl-L-alanyl-D-glutamyl-meso-2,6-diaminopimeloyl-D-alanyl-D-alanine + UDP-N-acetyl-alpha-D-glucosamine = di-trans,octa-cis-undecaprenyl diphospho-[N-acetyl-alpha-D-glucosaminyl-(1-&gt;4)]-N-acetyl-alpha-D-muramoyl-L-alanyl-D-glutamyl-meso-2,6-diaminopimeloyl-D-alanyl-D-alanine + UDP + H(+). Its pathway is cell wall biogenesis; peptidoglycan biosynthesis. Its function is as follows. Cell wall formation. Catalyzes the transfer of a GlcNAc subunit on undecaprenyl-pyrophosphoryl-MurNAc-pentapeptide (lipid intermediate I) to form undecaprenyl-pyrophosphoryl-MurNAc-(pentapeptide)GlcNAc (lipid intermediate II). The protein is UDP-N-acetylglucosamine--N-acetylmuramyl-(pentapeptide) pyrophosphoryl-undecaprenol N-acetylglucosamine transferase of Streptomyces coelicolor (strain ATCC BAA-471 / A3(2) / M145).